The sequence spans 237 residues: MYSVIIVAAGSGRRMNLDINKQFIKLREKEIIAHTIQVFYENINIDEIVVCIKKEEEDFFKENIINKYNFKNIKIAYGGKERQDSIYNGLKKLDKNCDIVLIHDGARPFVDHRIINESIKVAKEKKAVVVGVPVSDTIKIVSDGTVKETPERNLLWAAQTPQTFEYNLIIDAYEQAYKNNYYGTDDSMLVENIGQSVTMVMGSYENIKITSPEDLNIAEQILNMEKRDEVNSRRRII.

This sequence belongs to the IspD/TarI cytidylyltransferase family. IspD subfamily.

The catalysed reaction is 2-C-methyl-D-erythritol 4-phosphate + CTP + H(+) = 4-CDP-2-C-methyl-D-erythritol + diphosphate. The protein operates within isoprenoid biosynthesis; isopentenyl diphosphate biosynthesis via DXP pathway; isopentenyl diphosphate from 1-deoxy-D-xylulose 5-phosphate: step 2/6. Functionally, catalyzes the formation of 4-diphosphocytidyl-2-C-methyl-D-erythritol from CTP and 2-C-methyl-D-erythritol 4-phosphate (MEP). The chain is 2-C-methyl-D-erythritol 4-phosphate cytidylyltransferase from Clostridioides difficile (strain 630) (Peptoclostridium difficile).